The chain runs to 183 residues: Bifunctional protein PyrR (183 aa).

The PRPP-binding motif lies at Val-102–Thr-114.

The protein belongs to the purine/pyrimidine phosphoribosyltransferase family. PyrR subfamily. In terms of assembly, homodimer and homohexamer; in equilibrium.

It carries out the reaction UMP + diphosphate = 5-phospho-alpha-D-ribose 1-diphosphate + uracil. Its function is as follows. Regulates transcriptional attenuation of the pyrimidine nucleotide (pyr) operon by binding in a uridine-dependent manner to specific sites on pyr mRNA. This disrupts an antiterminator hairpin in the RNA and favors formation of a downstream transcription terminator, leading to a reduced expression of downstream genes. Also displays a weak uracil phosphoribosyltransferase activity which is not physiologically significant. In Listeria welshimeri serovar 6b (strain ATCC 35897 / DSM 20650 / CCUG 15529 / CIP 8149 / NCTC 11857 / SLCC 5334 / V8), this protein is Bifunctional protein PyrR.